The sequence spans 419 residues: Tyrosine--tRNA ligase (419 aa).

Tyrosine 34 contacts L-tyrosine. Residues 39–48 carry the 'HIGH' region motif; that stretch reads PSGDSMHIGH. L-tyrosine is bound by residues tyrosine 168 and glutamine 172. The 'KMSKS' region motif lies at 230–234; that stretch reads KFGKS. Residue lysine 233 participates in ATP binding. The 67-residue stretch at 352 to 418 folds into the S4 RNA-binding domain; that stretch reads ANLVDWLVTL…GKKKYFLVSY (67 aa).

Belongs to the class-I aminoacyl-tRNA synthetase family. TyrS type 1 subfamily. In terms of assembly, homodimer.

It is found in the cytoplasm. It carries out the reaction tRNA(Tyr) + L-tyrosine + ATP = L-tyrosyl-tRNA(Tyr) + AMP + diphosphate + H(+). Catalyzes the attachment of tyrosine to tRNA(Tyr) in a two-step reaction: tyrosine is first activated by ATP to form Tyr-AMP and then transferred to the acceptor end of tRNA(Tyr). This chain is Tyrosine--tRNA ligase, found in Listeria monocytogenes serotype 4b (strain F2365).